We begin with the raw amino-acid sequence, 469 residues long: MAKTLYEKLFDAHVVYEAAGETPILYINRHLIHEVTSPQAFDGLRVAGRQVRQIGKTFGTMDHSISTQVRDVNKLEGQAKIQVLELAKNCEANGISLFDMQTKEQGIVHVMGPEQGLTLPGMTIVCGDSHTATHGAFGALAFGIGTSEVEHVLATQTLKQARAKSMKVEVRGKVNPGITAKDIVLAIIGKTTMAGGTGHVVEFCGEAIRNLSMEGRMTVCNMAIEFGAKAGLVAPDETTFAYLKDRPHAPKGKDWDDAVEYWTTLKSDDDAVFDSVVVLEAKDIAPQVTWGTNPGQVIGIDQVVPNPQEMADPVTKASAEKALAYIGLDANTDMKNIPVDQVFIGSCTNSRIEDLRAAAAVMKGRKKADNVKRVLVVPGSGLVKEQAEKEGLDKIFIEAGAEWRNPGCSMCLGMNDDRLGEWERCASTSNRNFEGRQGRNGRTHLVSPAMAAAAAMFGKFVDIRHVELN.

Positions 347, 408, and 411 each coordinate [4Fe-4S] cluster.

This sequence belongs to the aconitase/IPM isomerase family. LeuC type 1 subfamily. Heterodimer of LeuC and LeuD. It depends on [4Fe-4S] cluster as a cofactor.

It catalyses the reaction (2R,3S)-3-isopropylmalate = (2S)-2-isopropylmalate. It participates in amino-acid biosynthesis; L-leucine biosynthesis; L-leucine from 3-methyl-2-oxobutanoate: step 2/4. Functionally, catalyzes the isomerization between 2-isopropylmalate and 3-isopropylmalate, via the formation of 2-isopropylmaleate. This Actinobacillus pleuropneumoniae serotype 5b (strain L20) protein is 3-isopropylmalate dehydratase large subunit.